The chain runs to 304 residues: MQQAELIERIKELKIKRNAVILAHYYSRPEVQDIADFVGDSLGLSQEAVRQTADVIVFCGVHFMGESAAILCPDKTVLLPEIDATCPMADMVDIEGLRREKEKHPNAVVVCYVNSSAAIKAESYICCTSANAVEVVNSLEAEKVIFVPDKNLAAYVESRTDKKIIPWEGHCPTHHQILREDVLKMKEKHPEAKFIAHPECRPEVLELADHIASTRGMIMYAKNSPAKEFIIGTECGLLHGLHKAAPEKKYYCVSEFACCPSMKMVNLEKVLVSLEKVQHVVTVPYNVRTRAKEALDRMLAVKIR.

Iminosuccinate is bound by residues His24 and Ser41. Cys86 serves as a coordination point for [4Fe-4S] cluster. Iminosuccinate is bound by residues 112–114 and Ser129; that span reads YVN. Cys171 is a [4Fe-4S] cluster binding site. Iminosuccinate-binding positions include 197 to 199 and Thr214; that span reads HPE. Residue Cys259 participates in [4Fe-4S] cluster binding.

This sequence belongs to the quinolinate synthase family. Type 2 subfamily. Requires [4Fe-4S] cluster as cofactor.

The protein resides in the cytoplasm. The catalysed reaction is iminosuccinate + dihydroxyacetone phosphate = quinolinate + phosphate + 2 H2O + H(+). It functions in the pathway cofactor biosynthesis; NAD(+) biosynthesis; quinolinate from iminoaspartate: step 1/1. Catalyzes the condensation of iminoaspartate with dihydroxyacetone phosphate to form quinolinate. The sequence is that of Quinolinate synthase from Methanosarcina barkeri (strain Fusaro / DSM 804).